The chain runs to 150 residues: Peptide deformylase 1 (150 aa).

Fe cation-binding residues include C88 and H130. Residue E131 is part of the active site. H134 is a binding site for Fe cation.

Belongs to the polypeptide deformylase family. Fe(2+) serves as cofactor.

It carries out the reaction N-terminal N-formyl-L-methionyl-[peptide] + H2O = N-terminal L-methionyl-[peptide] + formate. Functionally, removes the formyl group from the N-terminal Met of newly synthesized proteins. Requires at least a dipeptide for an efficient rate of reaction. N-terminal L-methionine is a prerequisite for activity but the enzyme has broad specificity at other positions. This chain is Peptide deformylase 1, found in Clostridium acetobutylicum (strain ATCC 824 / DSM 792 / JCM 1419 / IAM 19013 / LMG 5710 / NBRC 13948 / NRRL B-527 / VKM B-1787 / 2291 / W).